A 110-amino-acid chain; its full sequence is Large ribosomal subunit protein uL22 (110 aa).

This sequence belongs to the universal ribosomal protein uL22 family. Part of the 50S ribosomal subunit.

This protein binds specifically to 23S rRNA; its binding is stimulated by other ribosomal proteins, e.g. L4, L17, and L20. It is important during the early stages of 50S assembly. It makes multiple contacts with different domains of the 23S rRNA in the assembled 50S subunit and ribosome. Its function is as follows. The globular domain of the protein is located near the polypeptide exit tunnel on the outside of the subunit, while an extended beta-hairpin is found that lines the wall of the exit tunnel in the center of the 70S ribosome. The polypeptide is Large ribosomal subunit protein uL22 (Methylococcus capsulatus (strain ATCC 33009 / NCIMB 11132 / Bath)).